Consider the following 317-residue polypeptide: Putative 2-hydroxyacid dehydrogenase SERP1888 (317 aa).

NAD(+) is bound by residues E155–I156, A234–R236, and D260. R236 is an active-site residue. The active site involves E265. H283 acts as the Proton donor in catalysis. Residue H283–N286 participates in NAD(+) binding.

It belongs to the D-isomer specific 2-hydroxyacid dehydrogenase family.

This Staphylococcus epidermidis (strain ATCC 35984 / DSM 28319 / BCRC 17069 / CCUG 31568 / BM 3577 / RP62A) protein is Putative 2-hydroxyacid dehydrogenase SERP1888.